Reading from the N-terminus, the 840-residue chain is MRIVKFPWFSHHEESRDYEIYTVDVSPDGKRVATGGLDGKIRIWSVDALVSAAAGESGVDRDTHRPLASMSRHTGSVTCVKFSPDGNYLASGSDDRILLIWAMDEENHGGSFGSEGEKEHWTVRKRLVAHDNDIQDICWAPDSSILVTVGLDRSVIVWNGLNFERLKRFDVHQSLVKGVIFDPANKYFATASDDRTMRVFRYHKTGEVSFTIEQVIVEPFIASPLTTYFRRLSWSPDGQHIAVPNATNGPVSSVAIINRGTWDSSISLIGHDAPTEVARFNPRLFKSDVEKKAKNAKDELSKDTKNNKKLESIIATAGQDKSLALWITSRPRPIFVAYDIAQKSITDMAWNPNGNILFVTSLDSSIVMLMFDANELGMPIPIEGNMEQLHRYGVDKDSFDLPESVNQLLLEDKYGTKKKQHELSSSTQSTALERRLEPNQFQKKINSREISPLKSTEKVNILIPKRKKDMKMNKVIVKDGKKRVAPTLISTAGLQPTVTNVKEVASSSGKVVKPVLKKTNDINEYSGRLSTPSIPIPRLGIHTLVMGLKERGKDKFERGAEVGPDDELREASNQITFDGESYGQDSLMKDEYRMTLNNRLTKEKVSSNEPYLRYIENTGVIADTDAVLLECGSIDDFFTLEIRNGVERAIQFDSDALFDNPTRILGYHEGQRTIEAFIPNVIISGVGSPVSKYWSLATADGFIYIISYNGQLLIPKINLGQKVVKQVVCSNYLLVLTERGLFYAWDISAKRSVIKNVSILPIINNDPVEGNRVRVNKSIRKFEFEVSEKTVIVHLTNNRSFKWLAYFGCWSEIQELVAPRETVANILLTENEIPPQSSSI.

WD repeat units follow at residues 15 to 54 (SRDY…SAAA), 72 to 111 (RHTG…HGGS), 129 to 168 (AHDN…RLKR), 171 to 210 (VHQS…EVSF), 224 to 267 (PLTT…SSIS), 292 to 336 (KAKN…PIFV), and 340 to 381 (IAQK…MPIP).

This sequence belongs to the WD repeat HIR1 family.

Its subcellular location is the nucleus. Functionally, required for replication-independent chromatin assembly and for the periodic repression of histone gene transcription during the cell cycle. This Candida glabrata (strain ATCC 2001 / BCRC 20586 / JCM 3761 / NBRC 0622 / NRRL Y-65 / CBS 138) (Yeast) protein is Protein HIR1 (HIR1).